A 416-amino-acid chain; its full sequence is Tyrosine--tRNA ligase (416 aa).

Residue tyrosine 37 participates in L-tyrosine binding. A 'HIGH' region motif is present at residues 42–51; it reads PTADSLHVGN. Tyrosine 176 and glutamine 180 together coordinate L-tyrosine. A 'KMSKS' region motif is present at residues 236–240; the sequence is KMGKS. Lysine 239 contacts ATP. The 67-residue stretch at 350 to 416 folds into the S4 RNA-binding domain; sequence LPAFRVFQEA…KKKHILLRPV (67 aa).

It belongs to the class-I aminoacyl-tRNA synthetase family. TyrS type 1 subfamily. Homodimer.

It localises to the cytoplasm. The enzyme catalyses tRNA(Tyr) + L-tyrosine + ATP = L-tyrosyl-tRNA(Tyr) + AMP + diphosphate + H(+). Functionally, catalyzes the attachment of tyrosine to tRNA(Tyr) in a two-step reaction: tyrosine is first activated by ATP to form Tyr-AMP and then transferred to the acceptor end of tRNA(Tyr). This chain is Tyrosine--tRNA ligase, found in Gluconobacter oxydans (strain 621H) (Gluconobacter suboxydans).